Consider the following 399-residue polypeptide: Unsaturated chondroitin disaccharide hydrolase (399 aa).

Aspartate 116 (nucleophile) is an active-site residue. 8 residues coordinate substrate: aspartate 116, aspartate 176, glycine 234, threonine 236, arginine 248, tryptophan 252, serine 366, and serine 369. Aspartate 176 (proton donor) is an active-site residue.

This sequence belongs to the glycosyl hydrolase 88 family. Monomer.

The enzyme catalyses beta-D-4-deoxy-Delta(4)-GlcpA-(1-&gt;3)-beta-D-GalpNAc6S + H2O = N-acetyl-beta-D-galactosamine 6-sulfate + 5-dehydro-4-deoxy-D-glucuronate. Its function is as follows. Catalyzes the hydrolysis of unsaturated hyaluronate and chondroitin disaccharides. Also degrades unsaturated heparin disaccharides. Releases 4-deoxy-4,5-didehydro D-glucuronic acid or 4-deoxy-4,5-didehydro L-iduronic acid from chondroitin disaccharides, hyaluronan disaccharides and heparin disaccharides and cleaves both glycosidic (1-&gt;3) and (1-&gt;4) bonds. Prefers sulfated glycosaminoglycans compared to unsulfated glycosaminoglycans. Probably required for mammalian cells invasion through the degradation of extracellular sulfated glycosaminoglycans such as chondroitin and hyaluronan. The protein is Unsaturated chondroitin disaccharide hydrolase (ugl) of Streptococcus pyogenes serotype M1.